We begin with the raw amino-acid sequence, 450 residues long: tRNA modification GTPase MnmE (450 aa).

Arg23, Glu79, and Lys118 together coordinate (6S)-5-formyl-5,6,7,8-tetrahydrofolate. The 161-residue stretch at Gly214–Gly374 folds into the TrmE-type G domain. Residue Asn224 participates in K(+) binding. GTP contacts are provided by residues Asn224–Ser229, Thr243–Thr249, and Asp268–Gly271. Position 228 (Ser228) interacts with Mg(2+). The K(+) site is built by Thr243, Ile245, and Thr248. Thr249 is a binding site for Mg(2+). Lys450 is a binding site for (6S)-5-formyl-5,6,7,8-tetrahydrofolate.

The protein belongs to the TRAFAC class TrmE-Era-EngA-EngB-Septin-like GTPase superfamily. TrmE GTPase family. As to quaternary structure, homodimer. Heterotetramer of two MnmE and two MnmG subunits. The cofactor is K(+).

It localises to the cytoplasm. Its function is as follows. Exhibits a very high intrinsic GTPase hydrolysis rate. Involved in the addition of a carboxymethylaminomethyl (cmnm) group at the wobble position (U34) of certain tRNAs, forming tRNA-cmnm(5)s(2)U34. This is tRNA modification GTPase MnmE from Francisella tularensis subsp. tularensis (strain WY96-3418).